Reading from the N-terminus, the 336-residue chain is MLESDRLISSQSIVSEDAMDRAIRPLSLSEYVGQDSVSSQMQIFINAARKRNDPLDHVLIFGPPGLGKTTLANIIAHEMGVNIRQTSGPVIERAGDIAAILTNLQQNDVLFIDEIHRLSPVIEEILYPAMEDYKLDIMIGEGPAARSIKLELPPFTLIGATTRAGLLTSPLRDRFGIVQRLEYYSVDSLTQIVARSAHLLGVPTKPEGAREIALRSRGTPRIANRLLRRVRDYSEVKGNGIITVDMAQQALEMLEVDQHGFDLMDRKLLLAVIEHFNGGPVGIDSIAAAIGEEKGTIEDVLEPFLIQQGFLMRTPRGRIATSKAYQHFGFSAIEQE.

The interval 4 to 184 (SDRLISSQSI…FGIVQRLEYY (181 aa)) is large ATPase domain (RuvB-L). ATP-binding positions include isoleucine 23, arginine 24, glycine 65, lysine 68, threonine 69, threonine 70, 131-133 (EDY), arginine 174, tyrosine 184, and arginine 221. Residue threonine 69 participates in Mg(2+) binding. Residues 185–255 (SVDSLTQIVA…MAQQALEMLE (71 aa)) are small ATPAse domain (RuvB-S). Residues 258 to 336 (QHGFDLMDRK…HFGFSAIEQE (79 aa)) are head domain (RuvB-H). DNA is bound by residues arginine 313 and arginine 318.

Belongs to the RuvB family. Homohexamer. Forms an RuvA(8)-RuvB(12)-Holliday junction (HJ) complex. HJ DNA is sandwiched between 2 RuvA tetramers; dsDNA enters through RuvA and exits via RuvB. An RuvB hexamer assembles on each DNA strand where it exits the tetramer. Each RuvB hexamer is contacted by two RuvA subunits (via domain III) on 2 adjacent RuvB subunits; this complex drives branch migration. In the full resolvosome a probable DNA-RuvA(4)-RuvB(12)-RuvC(2) complex forms which resolves the HJ.

The protein resides in the cytoplasm. The enzyme catalyses ATP + H2O = ADP + phosphate + H(+). Its function is as follows. The RuvA-RuvB-RuvC complex processes Holliday junction (HJ) DNA during genetic recombination and DNA repair, while the RuvA-RuvB complex plays an important role in the rescue of blocked DNA replication forks via replication fork reversal (RFR). RuvA specifically binds to HJ cruciform DNA, conferring on it an open structure. The RuvB hexamer acts as an ATP-dependent pump, pulling dsDNA into and through the RuvAB complex. RuvB forms 2 homohexamers on either side of HJ DNA bound by 1 or 2 RuvA tetramers; 4 subunits per hexamer contact DNA at a time. Coordinated motions by a converter formed by DNA-disengaged RuvB subunits stimulates ATP hydrolysis and nucleotide exchange. Immobilization of the converter enables RuvB to convert the ATP-contained energy into a lever motion, pulling 2 nucleotides of DNA out of the RuvA tetramer per ATP hydrolyzed, thus driving DNA branch migration. The RuvB motors rotate together with the DNA substrate, which together with the progressing nucleotide cycle form the mechanistic basis for DNA recombination by continuous HJ branch migration. Branch migration allows RuvC to scan DNA until it finds its consensus sequence, where it cleaves and resolves cruciform DNA. The protein is Holliday junction branch migration complex subunit RuvB of Legionella pneumophila subsp. pneumophila (strain Philadelphia 1 / ATCC 33152 / DSM 7513).